Here is a 185-residue protein sequence, read N- to C-terminus: Ribosome-recycling factor (185 aa).

This sequence belongs to the RRF family.

The protein resides in the cytoplasm. Its function is as follows. Responsible for the release of ribosomes from messenger RNA at the termination of protein biosynthesis. May increase the efficiency of translation by recycling ribosomes from one round of translation to another. The chain is Ribosome-recycling factor from Streptomyces avermitilis (strain ATCC 31267 / DSM 46492 / JCM 5070 / NBRC 14893 / NCIMB 12804 / NRRL 8165 / MA-4680).